The chain runs to 169 residues: MSEKALTLKQSGVRWLWLAIVIFLADIGIKYVVMNNMGYGWANRIEILPFFNLLYVHNYGAAFSFLSDQAGWQRWLFTGIAFVVTGLLTYWMSKLPAKEKWNNIAYAMIIGGAVGNVFDRVIHGFVVDYLDFYWGNYHWPAFNLADMAICLGAAMIILDGFRKKDTAKA.

A run of 4 helical transmembrane segments spans residues 15-35, 47-67, 75-95, and 107-127; these read WLWLAIVIFLADIGIKYVVMN, ILPFFNLLYVHNYGAAFSFLS, WLFTGIAFVVTGLLTYWMSKL, and AMIIGGAVGNVFDRVIHGFVV. Catalysis depends on residues Asp-128 and Asp-146. The chain crosses the membrane as a helical span at residues 141–161; it reads AFNLADMAICLGAAMIILDGF.

It belongs to the peptidase A8 family.

Its subcellular location is the cell inner membrane. The enzyme catalyses Release of signal peptides from bacterial membrane prolipoproteins. Hydrolyzes -Xaa-Yaa-Zaa-|-(S,diacylglyceryl)Cys-, in which Xaa is hydrophobic (preferably Leu), and Yaa (Ala or Ser) and Zaa (Gly or Ala) have small, neutral side chains.. Its pathway is protein modification; lipoprotein biosynthesis (signal peptide cleavage). In terms of biological role, this protein specifically catalyzes the removal of signal peptides from prolipoproteins. This Vibrio parahaemolyticus serotype O3:K6 (strain RIMD 2210633) protein is Lipoprotein signal peptidase.